The following is a 1265-amino-acid chain: Protein diaphanous homolog 1 (1265 aa).

Methionine 1 is modified (N-acetylmethionine). Positions methionine 1–arginine 12 are enriched in gly residues. Disordered regions lie at residues methionine 1 to lysine 42 and serine 54 to serine 83. Serine 22 carries the post-translational modification Phosphoserine. Basic and acidic residues predominate over residues serine 54–asparagine 65. Residues alanine 67–serine 83 show a composition bias toward polar residues. The GBD/FH3 domain occupies leucine 84–aspartate 449. A coiled-coil region spans residues valine 474–valine 568. Positions serine 573–proline 742 are disordered. 2 stretches are compositionally biased toward pro residues: residues isoleucine 594–proline 628 and isoleucine 645–proline 742. In terms of domain architecture, FH1 spans proline 625–proline 757. Threonine 761 carries the phosphothreonine modification. In terms of domain architecture, FH2 spans proline 762–lysine 1164. Residues lysine 1050 and lysine 1096 each carry the N6-acetyllysine modification. Tyrosine 1114 is subject to Phosphotyrosine. Residues alanine 1141 to glutamate 1185 are a coiled coil. Positions aspartate 1187–asparagine 1215 constitute a DAD domain. Serine 1247 is modified (phosphoserine).

Belongs to the formin homology family. Diaphanous subfamily. As to quaternary structure, homodimer. Interacts with the GTP-bound form of RHOA. Interacts with RHOC, PFY1, MAPRE1, BAIAP2 and APC. Interacts with SCAI. Interacts with DCAF7, via FH2 domain. Interacts with NCDN. Interacts with OSBPL10, OSBPL2, VIM, TUBB and DYN1. In terms of processing, phosphorylation at Thr-761 is stimulated by cAMP and regulates stability, complex formation and mitochondrial movement. As to expression, expressed in testis. Present in Sertoli cells (at protein level).

The protein resides in the cell membrane. It localises to the cell projection. It is found in the ruffle membrane. The protein localises to the cytoplasm. Its subcellular location is the cytoskeleton. The protein resides in the microtubule organizing center. It localises to the centrosome. It is found in the spindle. The protein localises to the nucleus. Its function is as follows. Actin nucleation and elongation factor required for the assembly of F-actin structures, such as actin cables and stress fibers. Binds to the barbed end of the actin filament and slows down actin polymerization and depolymerization. Required for cytokinesis, and transcriptional activation of the serum response factor. DFR proteins couple Rho and Src tyrosine kinase during signaling and the regulation of actin dynamics. Functions as a scaffold protein for MAPRE1 and APC to stabilize microtubules and promote cell migration. Has neurite outgrowth promoting activity. Acts in a Rho-dependent manner to recruit PFY1 to the membrane. The MEMO1-RHOA-DIAPH1 signaling pathway plays an important role in ERBB2-dependent stabilization of microtubules at the cell cortex. It controls the localization of APC and CLASP2 to the cell membrane, via the regulation of GSK3B activity. In turn, membrane-bound APC allows the localization of the MACF1 to the cell membrane, which is required for microtubule capture and stabilization. Plays a role in the regulation of cell morphology and cytoskeletal organization. Required in the control of cell shape. Also acts as an actin nucleation and elongation factor in the nucleus by promoting nuclear actin polymerization inside the nucleus to drive serum-dependent SRF-MRTFA activity. This chain is Protein diaphanous homolog 1, found in Rattus norvegicus (Rat).